The following is a 219-amino-acid chain: Probable GTP-binding protein EngB (219 aa).

In terms of domain architecture, EngB-type G spans 31–205 (VGVEIAFAGR…LAILNEWCHP (175 aa)). GTP is bound by residues 39–46 (GRSNAGKS), 66–70 (GRTQL), 84–87 (DLPG), 151–154 (TKSD), and 184–186 (FSS). Residues Ser46 and Thr68 each contribute to the Mg(2+) site.

It belongs to the TRAFAC class TrmE-Era-EngA-EngB-Septin-like GTPase superfamily. EngB GTPase family. Mg(2+) is required as a cofactor.

Necessary for normal cell division and for the maintenance of normal septation. The sequence is that of Probable GTP-binding protein EngB from Shewanella baltica (strain OS223).